Reading from the N-terminus, the 72-residue chain is DNA-directed RNA polymerase subunit omega (72 aa).

Belongs to the RNA polymerase subunit omega family. The RNAP catalytic core consists of 2 alpha, 1 beta, 1 beta' and 1 omega subunit. When a sigma factor is associated with the core the holoenzyme is formed, which can initiate transcription.

The catalysed reaction is RNA(n) + a ribonucleoside 5'-triphosphate = RNA(n+1) + diphosphate. In terms of biological role, promotes RNA polymerase assembly. Latches the N- and C-terminal regions of the beta' subunit thereby facilitating its interaction with the beta and alpha subunits. The protein is DNA-directed RNA polymerase subunit omega of Petrotoga mobilis (strain DSM 10674 / SJ95).